Consider the following 365-residue polypeptide: LVPLFVFILFLHKCFFTTSNNNKKLPPSPRKLPIIGNLHQLGLHPHRSLHKLSKKYGPVMLLHLGSKPVIVASSVEAVRDIMKTNDLVWSNRPKSKMADRLIYGSKDVSFSPHGEYWRQIRSITVLHLLSNKRVQSYRAAREEETSNMIEKLKQMSNSSSSATDLRDLFCWLAYNIINRVALGKKYNDEIDAKATLDKFVELLGTFNVGDYIPCLEWVNKITGFDSKVDKVAKDLDTFLEFVIEAHMIRNEKEENRAGESKDLVDVLLEIQNGKETGFPIQRDSLKALLLDPFSAGTDTIYTVLEWTMTELLRHPRAMEKLQNEVQGLAQEKAEITEDDLPNMHYLKAVIKETLRLHPPIPLLLP.

It belongs to the cytochrome P450 family. Requires heme as cofactor.

Its function is as follows. May have a role in maturation, such as during flavor formation or other metabolite production specific to aging tissues. The chain is Cytochrome P450 71A3 (CYP71A3) from Solanum melongena (Eggplant).